The sequence spans 97 residues: Large ribosomal subunit protein bL28 (97 aa).

Belongs to the bacterial ribosomal protein bL28 family.

This Nitrobacter winogradskyi (strain ATCC 25391 / DSM 10237 / CIP 104748 / NCIMB 11846 / Nb-255) protein is Large ribosomal subunit protein bL28.